The primary structure comprises 401 residues: Cartilage-associated protein (401 aa).

The signal sequence occupies residues 1–26; the sequence is MEPGRRGAAALLALLCVACALRAGRA. N-linked (GlcNAc...) asparagine glycosylation is found at asparagine 87 and asparagine 363.

It belongs to the leprecan family. As to expression, found in articular chondrocytes. Expressed in a variety of tissues.

It localises to the secreted. The protein resides in the extracellular space. The protein localises to the extracellular matrix. Necessary for efficient 3-hydroxylation of fibrillar collagen prolyl residues. This is Cartilage-associated protein (CRTAP) from Homo sapiens (Human).